The chain runs to 308 residues: N-acetylmuramic acid 6-phosphate etherase (308 aa).

The SIS domain occupies 63 to 226 (IVDAFACGGR…STASMIRSGK (164 aa)). The Proton donor role is filled by Glu91. The active site involves Glu122.

Belongs to the GCKR-like family. MurNAc-6-P etherase subfamily. In terms of assembly, homodimer.

It carries out the reaction N-acetyl-D-muramate 6-phosphate + H2O = N-acetyl-D-glucosamine 6-phosphate + (R)-lactate. It functions in the pathway amino-sugar metabolism; 1,6-anhydro-N-acetylmuramate degradation. Its pathway is amino-sugar metabolism; N-acetylmuramate degradation. The protein operates within cell wall biogenesis; peptidoglycan recycling. Functionally, specifically catalyzes the cleavage of the D-lactyl ether substituent of MurNAc 6-phosphate, producing GlcNAc 6-phosphate and D-lactate. Together with AnmK, is also required for the utilization of anhydro-N-acetylmuramic acid (anhMurNAc) either imported from the medium or derived from its own cell wall murein, and thus plays a role in cell wall recycling. This Colwellia psychrerythraea (strain 34H / ATCC BAA-681) (Vibrio psychroerythus) protein is N-acetylmuramic acid 6-phosphate etherase.